The primary structure comprises 298 residues: Esterase Rv0045c (298 aa).

S122 functions as the Nucleophile in the catalytic mechanism. Catalysis depends on residues D146 and H277.

Belongs to the AB hydrolase superfamily. Monomer.

The catalysed reaction is a carboxylic ester + H2O = an alcohol + a carboxylate + H(+). It catalyses the reaction a butanoate ester + H2O = an aliphatic alcohol + butanoate + H(+). It carries out the reaction an acetyl ester + H2O = an aliphatic alcohol + acetate + H(+). The enzyme catalyses a hexanoate ester + H2O = an aliphatic alcohol + hexanoate + H(+). The catalysed reaction is a tetradecanoate ester + H2O = an aliphatic alcohol + tetradecanoate + H(+). With respect to regulation, hydrolysis of a fluorogenic ester substrate (MOAME) is allosterically inhibited by divalent transition metal cations (Cu(2+), Zn(2+), Ni(2+) and Co(2+)). Inhibition is largely due to a two order of magnitude drop in kcat, with relatively little change in KM. The thermal stability decreases with increasing concentrations of Ni(2+). Functionally, esterase likely involved in ester/lipid metabolism. Shows strong substrate selectivity toward short, straight chain alkyl esters with the highest activity toward four atom chains. The physiological substrate is unknown. Is able to hydrolyze ester bonds within a wide range of p-nitrophenyl derivatives (C2-C14) in vitro. The sequence is that of Esterase Rv0045c from Mycobacterium tuberculosis (strain ATCC 25618 / H37Rv).